Here is a 128-residue protein sequence, read N- to C-terminus: Large ribosomal subunit protein bL17 (128 aa).

The protein belongs to the bacterial ribosomal protein bL17 family. Part of the 50S ribosomal subunit. Contacts protein L32.

The protein is Large ribosomal subunit protein bL17 of Tolumonas auensis (strain DSM 9187 / NBRC 110442 / TA 4).